The sequence spans 322 residues: uncharacterized protein (322 aa).

Basic residues-rich tracts occupy residues 1 to 16 (MPGN…KSGT) and 43 to 61 (LRPH…RRPV). The tract at residues 1 to 69 (MPGNSRRRGA…PVKRADETET (69 aa)) is disordered. S-adenosyl-L-methionine-binding residues include G261, I281, and L290.

It belongs to the class IV-like SAM-binding methyltransferase superfamily. RNA methyltransferase TrmH family.

This is an uncharacterized protein from Mycobacterium bovis (strain BCG / Pasteur 1173P2).